The sequence spans 773 residues: 4'-phosphopantetheine phosphatase (773 aa).

Ala2 carries the N-acetylalanine modification. A pantothenate kinase region spans residues 2-402 (AECRASGGGS…APELCPTQRA (401 aa)). Acetyl-CoA is bound by residues Ser196 and Ser199. 3'-nitrotyrosine is present on Tyr320. The tract at residues 403 to 773 (RSGTFDLLEM…VIFKYEVPAE (371 aa)) is 4'-phosphopantetheine phosphatase. Residue Ser404 is modified to Phosphoserine. Residue Thr406 is modified to Phosphothreonine. Mn(2+) contacts are provided by Asp623, Asn624, and Asp659. A Subfamily II EGMGR motif motif is present at residues 724-728 (EGMGR).

In the N-terminal section; belongs to the type II pantothenate kinase family. It in the C-terminal section; belongs to the damage-control phosphatase family. Phosphopantetheine phosphatase (II) subfamily. Homodimer. Interacts with PKM. It depends on Mn(2+) as a cofactor. Ni(2+) is required as a cofactor.

It localises to the cytoplasm. The catalysed reaction is (R)-4'-phosphopantetheine + H2O = (R)-pantetheine + phosphate. It carries out the reaction (R)-4'-phosphopantetheine sulfonate + H2O = (R)-pantetheine sulfonate + phosphate. It catalyses the reaction (R)-4'-phospho-S-sulfopantetheine + H2O = (R)-S-sulfopantetheine + phosphate. With respect to regulation, activity is strongly promoted by Co(2+), Ni(2+), Mg(2+) and Mn(2+). Activity is inhibited by EDTA. Phosphatase which shows a preference for 4'-phosphopantetheine and its oxidatively damaged forms (sulfonate or S-sulfonate), providing strong indirect evidence that the phosphatase activity pre-empts damage in the coenzyme A (CoA) pathway. Hydrolyzing excess 4'-phosphopantetheine could constitute a directed overflow mechanism to prevent its oxidation to the S-sulfonate, sulfonate, or other forms. Hydrolyzing 4'-phosphopantetheine sulfonate or S-sulfonate would forestall their conversion to inactive forms of CoA and acyl carrier protein. May play a role in the physiological regulation of CoA intracellular levels. This is 4'-phosphopantetheine phosphatase from Rattus norvegicus (Rat).